Reading from the N-terminus, the 827-residue chain is MSLTRRDFIKANAVPATAAAAGLATPAIAQPAKANIRWDKGVCRFCGTGCSVLVGVQDGRVVATQGDPDSPVNRGLNCIKGYFLSKIMYGEDRLTRPLLRMKDGKFDKNGEFQPISWDQAFDIMAEKWKEQLKKPDGVTRVGMFGSGQWTIWEGYAASKLYKAGFRSNNLDPNARHCMASAVAGFMRTFGIDEPMGCYDDIEQTDAFVLWGSNMAEMHPILWSRVTDRRLTHEGCKVAVLSTFEHRSFELADIPMVFTPQTDLAILNYICHYIISKNAYNKEFIDKHVNFKKGATDIGYGLRPTHALEKDQANAATPDKADPMTFDEFKAFVAEYTVEKVSKLSGVPADKLEALAKLYADPKVKVVSFWTMGFNQHTRGTWVNNMIYNVHLLMGKISEPGNSPFSLTGQPSACGTAREVGTFAHRLPADMVVMNDKHREIAERCWKLPAGTINPKIGYHAVLQHRMLKDGKLNAYWVMCTNNMQTAPNMNEEGYPGYRNPANFIVVSDPYPTVTALAADLILPTAMWMEKEGAYGNAERRTQFWAPEGQGSGRGRSDLWQIMEFSKRFKIEEVWPEELIAKKPELRGKTLFEVLYKNGQVDKFPLTELQAGFENDEAKAFGFYPQKGLFEEYASFGRGHAHDLAPFESYHKARGLRWPVVDGKETLWRFREGYDPYVKAGEGVKFYGKPDGKAWIFALPYAPAAESPDKDFDLWLSTGRVLEHWHSGSMTRRVPELHKSVPNAVLYMHPNDAAKRNLRNGDVVKVASRRGEVTTRIDTRGRNKPPEGLVFMPFFDESQLVNKLTLDATCPISKETDYKKCAVKVSKA.

Positions 1-34 (MSLTRRDFIKANAVPATAAAAGLATPAIAQPAKA) form a signal peptide, tat-type signal. One can recognise a 4Fe-4S Mo/W bis-MGD-type domain in the interval 36 to 92 (IRWDKGVCRFCGTGCSVLVGVQDGRVVATQGDPDSPVNRGLNCIKGYFLSKIMYGED). [4Fe-4S] cluster-binding residues include Cys-43, Cys-46, Cys-50, and Cys-78. Residues Lys-80, Gln-148, Asn-173, Cys-177, 210–217 (WGSNMAEM), 241–245 (STFEH), 260–262 (QTD), Met-371, Gln-375, Asn-481, 507–508 (SD), Lys-530, Asp-557, and 717–726 (TGRVLEHWHS) contribute to the Mo-bis(molybdopterin guanine dinucleotide) site. Residue Phe-793 coordinates substrate. Asn-801 and Lys-818 together coordinate Mo-bis(molybdopterin guanine dinucleotide).

It belongs to the prokaryotic molybdopterin-containing oxidoreductase family. NasA/NapA/NarB subfamily. In terms of assembly, component of the periplasmic nitrate reductase NapAB complex composed of NapA and NapB. [4Fe-4S] cluster serves as cofactor. The cofactor is Mo-bis(molybdopterin guanine dinucleotide). Predicted to be exported by the Tat system. The position of the signal peptide cleavage has not been experimentally proven.

Its subcellular location is the periplasm. It carries out the reaction 2 Fe(II)-[cytochrome] + nitrate + 2 H(+) = 2 Fe(III)-[cytochrome] + nitrite + H2O. Catalytic subunit of the periplasmic nitrate reductase complex NapAB. Receives electrons from NapB and catalyzes the reduction of nitrate to nitrite. The protein is Periplasmic nitrate reductase of Paramagnetospirillum magnetotacticum (Aquaspirillum magnetotacticum).